The following is a 359-amino-acid chain: 4-galactosyl-N-acetylglucosaminide 3-alpha-L-fucosyltransferase 9 (359 aa).

Residues 1 to 11 are Cytoplasmic-facing; sequence MTSTSKGILRP. A helical; Signal-anchor for type II membrane protein membrane pass occupies residues 12–32; sequence FLIVCIILGCFVACLLIYIKP. Residues 33–359 are Lumenal-facing; sequence TNSWVFSPME…VGNLEKWFWN (327 aa). N62 carries an N-linked (GlcNAc...) asparagine glycan. The interval 63–168 is acceptor-binding; the sequence is ETTILVWVWP…RRDSDIQVPY (106 aa). Q75 contacts a beta-D-galactosyl-(1-&gt;4)-N-acetyl-beta-D-glucosaminyl derivative. Disulfide bonds link C82–C335, C91–C338, and C190–C238. Residue N101 is glycosylated (N-linked (GlcNAc...) asparagine). E137 serves as a coordination point for a beta-D-galactosyl-(1-&gt;4)-N-acetyl-beta-D-glucosaminyl derivative. The active-site Nucleophile is E137. E137 contributes to the GDP-beta-L-fucose binding site. Residue N153 is glycosylated (N-linked (GlcNAc...) asparagine). GDP-beta-L-fucose is bound by residues Y168, V192, S194, N195, R202, V226, Y241, N246, Y252, E255, and K256. The donor-binding stretch occupies residues 169–326; sequence GFLTVSTSPF…NWRKDFTVNL (158 aa). The interval 327-359 is acceptor-binding; that stretch reads PRFWESHACLACDHVKRHQEYKSVGNLEKWFWN.

The protein belongs to the glycosyltransferase 10 family. In terms of assembly, homodimer. In terms of processing, N-glycosylated with complex-type N-glycans.

Its subcellular location is the golgi apparatus. It localises to the trans-Golgi network membrane. It is found in the golgi apparatus membrane. It carries out the reaction a beta-D-galactosyl-(1-&gt;4)-N-acetyl-beta-D-glucosaminyl derivative + GDP-beta-L-fucose = a beta-D-galactosyl-(1-&gt;4)-[alpha-L-fucosyl-(1-&gt;3)]-N-acetyl-beta-D-glucosaminyl derivative + GDP + H(+). The catalysed reaction is an alpha-Neu5Ac-(2-&gt;3)-beta-D-Gal-(1-&gt;4)-beta-D-GlcNAc-(1-&gt;3)-beta-D-Gal-(1-&gt;4)-beta-D-GlcNAc derivative + GDP-beta-L-fucose = an alpha-Neu5Ac-(2-&gt;3)-beta-D-Gal-(1-&gt;4)-beta-D-GlcNAc-(1-&gt;3)-beta-D-Gal-(1-&gt;4)-[alpha-L-Fuc-(1-&gt;3)]-beta-D-GlcNAc derivative + GDP + H(+). The enzyme catalyses alpha-N-glycoloylneuraminosyl-(2-&gt;3)-beta-D-galactosyl-(1-&gt;4)-N-acetyl-beta-D-glucosaminyl-(1-&gt;3)-beta-D-galactosyl-(1-&gt;4)-N-acetyl-beta-D-glucosaminyl-(1-&gt;3)-beta-D-galactosyl-(1-&gt;4)-beta-D-glucosyl-(1&lt;-&gt;1')-ceramide + GDP-beta-L-fucose = alpha-N-glycoloylneuraminosyl-(2-&gt;3)-beta-D-galactosyl-(1-&gt;4)-N-acetyl-beta-D-glucosaminyl-(1-&gt;3)-beta-D-galactosyl-(1-&gt;4)-[alpha-L-fucosyl-(1-&gt;3)]-N-acetyl-beta-D-glucosaminyl-(1-&gt;3)-beta-D-galactosyl-(1-&gt;4)-beta-D-glucosyl-(1&lt;-&gt;1')-ceramide + GDP + H(+). It catalyses the reaction alpha-D-galactosyl-(1-&gt;3)-beta-D-galactosyl-(1-&gt;4)-N-acetyl-beta-D-glucosaminyl-(1-&gt;3)-beta-D-galactosyl-(1-&gt;4)-beta-D-glucosyl-(1&lt;-&gt;1')-ceramide + GDP-beta-L-fucose = a neolactoside IV(3)-alpha-Gal,III(3)-alpha-Fuc-nLc4Cer + GDP + H(+). It carries out the reaction a neolactoside nLc4Cer + GDP-beta-L-fucose = a neolactoside III(3)-alpha-Fuc-nLc4Cer + GDP + H(+). The catalysed reaction is an N-acetyl-alpha-neuraminyl-(2-&gt;3)-beta-D-galactosyl-(1-&gt;4)-N-acetyl-beta-D-glucosaminyl derivative + GDP-beta-L-fucose = an alpha-Neu5Ac-(2-&gt;3)-beta-D-Gal-(1-&gt;4)-[alpha-L-Fuc-(1-&gt;3)]-beta-D-GlcNAc derivative + GDP + H(+). The enzyme catalyses beta-D-Gal-(1-&gt;4)-beta-D-GlcNAc-(1-&gt;3)-beta-D-Gal-(1-&gt;4)-D-Glc + GDP-beta-L-fucose = beta-D-Gal-(1-&gt;4)-[alpha-L-Fuc-(1-&gt;3)]-beta-D-GlcNAc-(1-&gt;3)-beta-D-Gal-(1-&gt;4)-D-Glc + GDP + H(+). It catalyses the reaction an alpha-L-Fuc-(1-&gt;2)-beta-D-Gal-(1-&gt;4)-beta-D-GlcNAc derivative + GDP-beta-L-fucose = an alpha-L-Fuc-(1-&gt;2)-beta-D-Gal-(1-&gt;4)-[alpha-L-Fuc-(1-&gt;3)]-beta-D-GlcNAc derivative + GDP + H(+). Its pathway is protein modification; protein glycosylation. The protein operates within glycolipid biosynthesis. Activated by Mn2+. Functionally, catalyzes alpha(1-&gt;3) linkage of fucosyl moiety transferred from GDP-beta-L-fucose to N-acetyl glucosamine (GlcNAc) within type 2 lactosamine (LacNAc, beta-D-Gal-(1-&gt;4)-beta-D-GlcNAc-) glycan attached to glycolipids and N- or O-linked glycoproteins. Fucosylates distal type 2 LacNAc and its fucosylated (H-type 2 LacNAc) and sialylated (sialyl-type 2 LacNAc) derivatives to form Lewis x (Lex) (CD15) and Lewis y (Ley) antigenic epitopes involved in cell adhesion and differentiation. Generates Lex epitopes in the brain, presumably playing a role in the maintenance of neuronal stemness and neurite outgrowth in progenitor neural cells. Fucosylates the internal type 2 LacNAc unit of the polylactosamine chain to form VIM-2 antigen that serves as recognition epitope for SELE. Can also modify milk oligosaccharides in particular type 2 tetrasaccharide LNnT. The sequence is that of 4-galactosyl-N-acetylglucosaminide 3-alpha-L-fucosyltransferase 9 from Rattus norvegicus (Rat).